We begin with the raw amino-acid sequence, 217 residues long: Uridylate kinase (217 aa).

5-9 (KLTGR) serves as a coordination point for ATP. Position 37 (Gly37) interacts with UMP. ATP is bound by residues Gly38 and Arg42. UMP is bound by residues Asp59 and 107-113 (FQPGQST). ATP is bound by residues Asn134, Tyr139, and Asp142.

Belongs to the UMP kinase family. Homohexamer.

It is found in the cytoplasm. The enzyme catalyses UMP + ATP = UDP + ADP. The protein operates within pyrimidine metabolism; CTP biosynthesis via de novo pathway; UDP from UMP (UMPK route): step 1/1. Inhibited by UTP. Its function is as follows. Catalyzes the reversible phosphorylation of UMP to UDP. The protein is Uridylate kinase of Pyrobaculum calidifontis (strain DSM 21063 / JCM 11548 / VA1).